Consider the following 166-residue polypeptide: Lipoprotein signal peptidase (166 aa).

Helical transmembrane passes span 9–29, 45–65, 71–91, and 100–120; these read ASGA…FDQL, ALTS…FGFL, WQRW…CFLL, and FSLS…DRLV. Active-site residues include aspartate 126 and aspartate 144. The chain crosses the membrane as a helical span at residues 135-155; sequence WHFPAFNLADSAITVGAVLLV.

It belongs to the peptidase A8 family.

The protein localises to the cell inner membrane. It carries out the reaction Release of signal peptides from bacterial membrane prolipoproteins. Hydrolyzes -Xaa-Yaa-Zaa-|-(S,diacylglyceryl)Cys-, in which Xaa is hydrophobic (preferably Leu), and Yaa (Ala or Ser) and Zaa (Gly or Ala) have small, neutral side chains.. Its pathway is protein modification; lipoprotein biosynthesis (signal peptide cleavage). Functionally, this protein specifically catalyzes the removal of signal peptides from prolipoproteins. This chain is Lipoprotein signal peptidase, found in Burkholderia ambifaria (strain MC40-6).